The sequence spans 407 residues: Tryptophan synthase beta chain (407 aa).

A compositionally biased stretch (polar residues) spans 1 to 11 (MSTAPSQQHAS). Residues 1–25 (MSTAPSQQHASAQVPDPRGRFGDFG) are disordered. N6-(pyridoxal phosphate)lysine is present on lysine 100.

This sequence belongs to the TrpB family. As to quaternary structure, tetramer of two alpha and two beta chains. Requires pyridoxal 5'-phosphate as cofactor.

The catalysed reaction is (1S,2R)-1-C-(indol-3-yl)glycerol 3-phosphate + L-serine = D-glyceraldehyde 3-phosphate + L-tryptophan + H2O. The protein operates within amino-acid biosynthesis; L-tryptophan biosynthesis; L-tryptophan from chorismate: step 5/5. In terms of biological role, the beta subunit is responsible for the synthesis of L-tryptophan from indole and L-serine. This chain is Tryptophan synthase beta chain, found in Rhodopirellula baltica (strain DSM 10527 / NCIMB 13988 / SH1).